Reading from the N-terminus, the 392-residue chain is tRNA (guanine-N(7)-)-methyltransferase (392 aa).

Residues E123, E148, and D175 each contribute to the S-adenosyl-L-methionine site. Positions 201 and 231 each coordinate substrate.

This sequence belongs to the class I-like SAM-binding methyltransferase superfamily. TrmB family.

It catalyses the reaction guanosine(46) in tRNA + S-adenosyl-L-methionine = N(7)-methylguanosine(46) in tRNA + S-adenosyl-L-homocysteine. It participates in tRNA modification; N(7)-methylguanine-tRNA biosynthesis. Catalyzes the formation of N(7)-methylguanine at position 46 (m7G46) in tRNA. The chain is tRNA (guanine-N(7)-)-methyltransferase from Campylobacter jejuni subsp. jejuni serotype O:6 (strain 81116 / NCTC 11828).